A 260-amino-acid polypeptide reads, in one-letter code: Thiazole synthase (260 aa).

The Schiff-base intermediate with DXP role is filled by lysine 96. Residues glycine 157, 184–185, and 206–207 contribute to the 1-deoxy-D-xylulose 5-phosphate site; these read AG and NT.

Belongs to the ThiG family. Homotetramer. Forms heterodimers with either ThiH or ThiS.

Its subcellular location is the cytoplasm. It catalyses the reaction [ThiS sulfur-carrier protein]-C-terminal-Gly-aminoethanethioate + 2-iminoacetate + 1-deoxy-D-xylulose 5-phosphate = [ThiS sulfur-carrier protein]-C-terminal Gly-Gly + 2-[(2R,5Z)-2-carboxy-4-methylthiazol-5(2H)-ylidene]ethyl phosphate + 2 H2O + H(+). It participates in cofactor biosynthesis; thiamine diphosphate biosynthesis. Functionally, catalyzes the rearrangement of 1-deoxy-D-xylulose 5-phosphate (DXP) to produce the thiazole phosphate moiety of thiamine. Sulfur is provided by the thiocarboxylate moiety of the carrier protein ThiS. In vitro, sulfur can be provided by H(2)S. The chain is Thiazole synthase from Rhodopseudomonas palustris (strain BisB5).